A 352-amino-acid polypeptide reads, in one-letter code: Heat-inducible transcription repressor HrcA (352 aa).

Belongs to the HrcA family.

In terms of biological role, negative regulator of class I heat shock genes (grpE-dnaK-dnaJ and groELS operons). Prevents heat-shock induction of these operons. This Prochlorococcus marinus (strain MIT 9313) protein is Heat-inducible transcription repressor HrcA.